Here is a 522-residue protein sequence, read N- to C-terminus: DNA primase DnaG (522 aa).

Residues 171–257 (DAIIILEGRA…CVEDLVQKEI (87 aa)) enclose the Toprim domain. 3 residues coordinate Mg(2+): Glu177, Asp219, and Asp221.

This sequence belongs to the archaeal DnaG primase family. As to quaternary structure, forms a ternary complex with MCM helicase and DNA. Component of the archaeal exosome complex. Requires Mg(2+) as cofactor.

It carries out the reaction ssDNA + n NTP = ssDNA/pppN(pN)n-1 hybrid + (n-1) diphosphate.. In terms of biological role, RNA polymerase that catalyzes the synthesis of short RNA molecules used as primers for DNA polymerase during DNA replication. Also part of the exosome, which is a complex involved in RNA degradation. Acts as a poly(A)-binding protein that enhances the interaction between heteromeric, adenine-rich transcripts and the exosome. In Methanosarcina mazei (strain ATCC BAA-159 / DSM 3647 / Goe1 / Go1 / JCM 11833 / OCM 88) (Methanosarcina frisia), this protein is DNA primase DnaG.